Reading from the N-terminus, the 275-residue chain is 3-oxo-isoapionate decarboxylase (275 aa).

The enzyme catalyses 3-oxoisoapionate + H(+) = L-erythrulose + CO2. Its pathway is carbohydrate metabolism. Involved in catabolism of D-apiose. Catalyzes decarboxylation of 3-oxo-isoapionate to L-erythrulose. This Pectobacterium atrosepticum (strain SCRI 1043 / ATCC BAA-672) (Erwinia carotovora subsp. atroseptica) protein is 3-oxo-isoapionate decarboxylase.